The chain runs to 190 residues: MSKGTSIKEALSKWEEKNSEKAAEAKEVKLYQMLPPIEKMDASLSTLTVCEKLSLSTNCIEKIANLNGLKNLKILSLGRNNIKNLNGLEAVGDSLEELWISYNSIEKLKGIHVLKKLKVLLMSNNQVKDWGEFNKLQELPVLMELVFVGNPLEEKHSAEGDWQDRVTKSLKALKKLDGTPIIKNDEEEED.

4 LRR repeats span residues 49–70 (VCEKLSLSTNCIEKIANLNGLK), 71–92 (NLKILSLGRNNIKNLNGLEAVG), 94–115 (SLEELWISYNSIEKLKGIHVLK), and 116–137 (KLKVLLMSNNQVKDWGEFNKLQ). The LRRCT domain occupies 150–190 (NPLEEKHSAEGDWQDRVTKSLKALKKLDGTPIIKNDEEEED).

It belongs to the dynein light chain LC1-type family. Interacts with DNAH5, a outer arm dynein heavy chain. Interacts with tubulin located within the A-tubule of the outer doublets in a ATP-independent manner.

It is found in the cytoplasm. The protein localises to the cytoskeleton. It localises to the cilium axoneme. Functionally, part of the multisubunit axonemal ATPase complexes that generate the force for cilia motility and govern beat frequency. Component of the outer arm dynein (ODA). May be involved in a mechanosensory feedback mechanism controlling ODA activity based on external conformational cues by tethering the outer arm dynein heavy chain (DNAH5) to the microtubule within the axoneme. The polypeptide is Dynein axonemal light chain 1 (DNAL1) (Ciona intestinalis (Transparent sea squirt)).